The chain runs to 254 residues: Lipid uptake coordinator A (254 aa).

Transmembrane regions (helical) follow at residues 5–25 (VAVL…FYFV), 44–64 (LRIA…FTLL), 85–105 (IMAH…EVWL), and 114–134 (LFGI…GFYL). The tract at residues 143 to 254 (PPPKPLKPKK…SGVQVAKVDE (112 aa)) is disordered. Residues 148–163 (LKPKKPKQRRLRRKKT) show a composition bias toward basic residues. The span at 169 to 191 (AEPEAAEEAENTELAAQEDEEAV) shows a compositional bias: acidic residues. A compositionally biased stretch (low complexity) spans 192–220 (EAPPESIESPGGEPESATREAPAAETATA). The span at 227 to 244 (LRNRRPTGKTSHRRRRTR) shows a compositional bias: basic residues.

Interacts with the Mce1 and Mce4 accessory subunits Rv0199/OmamA, Rv0177/Mam1C and Rv3492c/Mam4B.

Its subcellular location is the cell membrane. Required for the import of both fatty acids and cholesterol during growth in macrophages and in axenic culture. Facilitates the uptake of these lipids by stabilizing protein subunits of the Mce1 and Mce4 multi-subunit transporters, which transport fatty acids and cholesterol, respectively. Required for full virulence in vivo. This Mycobacterium tuberculosis (strain ATCC 25618 / H37Rv) protein is Lipid uptake coordinator A.